Here is a 190-residue protein sequence, read N- to C-terminus: dITP/XTP pyrophosphatase (190 aa).

Residue 7 to 12 (SNNKNK) participates in substrate binding. Catalysis depends on Asp68, which acts as the Proton acceptor. Asp68 contributes to the Mg(2+) binding site. Residues Thr69, 148-151 (FGYD), Lys171, and 176-177 (HR) contribute to the substrate site.

Belongs to the HAM1 NTPase family. Homodimer. Mg(2+) is required as a cofactor.

The enzyme catalyses XTP + H2O = XMP + diphosphate + H(+). The catalysed reaction is dITP + H2O = dIMP + diphosphate + H(+). It carries out the reaction ITP + H2O = IMP + diphosphate + H(+). Its function is as follows. Pyrophosphatase that catalyzes the hydrolysis of nucleoside triphosphates to their monophosphate derivatives, with a high preference for the non-canonical purine nucleotides XTP (xanthosine triphosphate), dITP (deoxyinosine triphosphate) and ITP. Seems to function as a house-cleaning enzyme that removes non-canonical purine nucleotides from the nucleotide pool, thus preventing their incorporation into DNA/RNA and avoiding chromosomal lesions. This chain is dITP/XTP pyrophosphatase, found in Flavobacterium psychrophilum (strain ATCC 49511 / DSM 21280 / CIP 103535 / JIP02/86).